A 479-amino-acid polypeptide reads, in one-letter code: mRNA export factor ICP27 homolog (479 aa).

Positions 1–15 (MVPSQRLSRTSSISS) are enriched in low complexity. Disordered regions lie at residues 1–77 (MVPS…PSSV) and 91–210 (KKWD…NKPW). A compositionally biased stretch (acidic residues) spans 35-44 (TDCDLDPMEG). The segment at 61 to 146 (DEDPTPAHAI…TDESYGKRRH (86 aa)) is nuclear export signal and interaction with host NXF1. The interval 127–130 (KRRR) is nuclear localization signal. Residues 132–142 (EVHGCTDESYG) are compositionally biased toward basic and acidic residues. The segment at 143–145 (KRR) is nuclear localization signal. 4 residues coordinate Zn(2+): Cys-354, His-445, Cys-449, and Cys-454. The CHC2-type zinc finger occupies 354–454 (CFLPNTRDYN…HTRDCRSASC (101 aa)).

It belongs to the HHV-1 ICP27 protein family. As to quaternary structure, interacts with host XPO1 and with the XPO1 export pathway components small GTPase RAN and nucleoporin NUP214. Interacts with host SPEN, OTT1 and OTT3. Interacts with host SRSF1, SRSF3, SRSF7 and SRPK1. Interacts with host DHX9; this interaction may have an inhibitory effect on virion production. Interacts (via N-terminus) with host NXF1; this interaction plays a role in mRNA export. Post-translationally, phosphorylated by cellular protein kinase CK2.

The protein localises to the host nucleus. It localises to the host cytoplasm. In terms of biological role, promotes the nuclear export of a subset of early and late viral mRNAs by interacting with mRNAs and cellular export proteins. Additionally may prevent the establishment of cellular antiviral state, by acting as an alternative splicing factor for cellular RNAs such as STAT1, resulting in a STAT1 mRNA incapable of producing the STAT1alpha isoform. The chain is mRNA export factor ICP27 homolog from Homo sapiens (Human).